A 424-amino-acid chain; its full sequence is MSAEHSSDIAETIRRIGQQARAAGRALARSGTGARNDALAAIAARIEAGSEAIAAANAADLEAAREAGLDPALIDRMELTPGRIQAMADGLREIAALPDPVGAVRELASRPSGIQVGRMRMPIGVIGIIYESRPNVTADAAGLCIKSGNATILRGGSEAIRSNRAIAEQIRAGLEDAGLPGDGVQVVGTTDRDAVGALIQMPESVDVIVPRGGKGLVERIAREARVPVIKHLDGVCHVYIDEAADTEKAVAIAVNAKTQRLGTCNTMETLLVAEAAAERVLPEVGRQLRDAGIEVRGCERTRALIDEAVPATEEDWTTEYLGPTLAVRVVAGFDDAVAHIERYSSGHTEAIVTESYPLAQRFLREVDSSSVMVNASTRFADGQEYGLGAEIGISTDKLHARGPVGLEGLTTEKWIVLGDGHVRS.

It belongs to the gamma-glutamyl phosphate reductase family.

It localises to the cytoplasm. It catalyses the reaction L-glutamate 5-semialdehyde + phosphate + NADP(+) = L-glutamyl 5-phosphate + NADPH + H(+). The protein operates within amino-acid biosynthesis; L-proline biosynthesis; L-glutamate 5-semialdehyde from L-glutamate: step 2/2. Its function is as follows. Catalyzes the NADPH-dependent reduction of L-glutamate 5-phosphate into L-glutamate 5-semialdehyde and phosphate. The product spontaneously undergoes cyclization to form 1-pyrroline-5-carboxylate. This Halorhodospira halophila (strain DSM 244 / SL1) (Ectothiorhodospira halophila (strain DSM 244 / SL1)) protein is Gamma-glutamyl phosphate reductase.